We begin with the raw amino-acid sequence, 562 residues long: Probable Xaa-Pro aminopeptidase PEPP (562 aa).

The Mn(2+) site is built by aspartate 358, aspartate 369, glutamate 492, and glutamate 532.

This sequence belongs to the peptidase M24B family. It depends on Mn(2+) as a cofactor.

The catalysed reaction is Release of any N-terminal amino acid, including proline, that is linked to proline, even from a dipeptide or tripeptide.. Catalyzes the removal of a penultimate prolyl residue from the N-termini of peptides. The polypeptide is Probable Xaa-Pro aminopeptidase PEPP (PEPP) (Leptosphaeria maculans (strain JN3 / isolate v23.1.3 / race Av1-4-5-6-7-8) (Blackleg fungus)).